A 236-amino-acid chain; its full sequence is Hydantoin racemase (236 aa).

In terms of assembly, homohexamer, homoheptamer or homooctamer.

The enzyme catalyses a D-5-monosubstituted hydantoin = a L-5-monosubstituted hydantoin. It catalyses the reaction D-5-benzylhydantoin = L-5-benzylhydantoin. Its activity is regulated as follows. Completely inhibited by HgCl(2) and iodoacetamide. Stimulated by dithiothreitol. Functionally, involved in the asymmetric conversion of racemic 5-substituted hydantoins to the corresponding L-amino acids. Catalyzes the racemization via enolization of D- and L-5-monosubstituted hydantoins. It shows preference for hydantoins with arylalkyl side chains such as 5-benzylhydantoin (BH) and, to a lesser extent, 5-(3-indolylmethylene)hydantoin (IMH). This chain is Hydantoin racemase, found in Paenarthrobacter aurescens (Arthrobacter aurescens).